A 388-amino-acid polypeptide reads, in one-letter code: Probable fatty acid desaturase DES1 (388 aa).

Positions 1-33 (MATTPMTVVDHEAEEAVAKAREDDKSRQVDAFD) are disordered. Basic and acidic residues predominate over residues 9-30 (VDHEAEEAVAKAREDDKSRQVD). 2 consecutive transmembrane segments (helical) span residues 62–82 (LWYV…AAAM) and 85–105 (WAVW…FFVL). A Histidine box-1 motif is present at residues 107-111 (HDCGH). A helical transmembrane segment spans residues 119–139 (TLNSVVGHLLHSFILIPYHGW). Positions 143-147 (HRTHH) match the Histidine box-2 motif. The next 3 membrane-spanning stretches (helical) occupy residues 177–194 (IRFT…YLFY), 226–246 (WCIM…LQVL), and 248–268 (MYGL…YLHH). The Histidine box-3 signature appears at 310-314 (HVIHH).

It belongs to the fatty acid desaturase type 1 family. Highly expressed in root hair cells. Barely detected in panicle, shoot apex, stems and leaves.

Its subcellular location is the membrane. It participates in lipid metabolism; polyunsaturated fatty acid biosynthesis. This is Probable fatty acid desaturase DES1 from Sorghum bicolor (Sorghum).